The primary structure comprises 659 residues: Delta(6)-protoilludene synthase (659 aa).

Mg(2+)-binding residues include D91, N227, S231, and E235. A DDXXD motif motif is present at residues 91-95 (DEHTD). (2E,6E)-farnesyl diphosphate contacts are provided by R316 and Y317. A disordered region spans residues 528 to 586 (PQFSKTSGAPNGAHTPTTTNGSIKSNGFVSGDTNGHANGNGHVQTRSSTPSSSSSSTSS). Residues 530 to 573 (FSKTSGAPNGAHTPTTTNGSIKSNGFVSGDTNGHANGNGHVQTR) are compositionally biased toward polar residues. Low complexity predominate over residues 574–586 (SSTPSSSSSSTSS).

Belongs to the terpene synthase family. Mg(2+) serves as cofactor.

The catalysed reaction is (2E,6E)-farnesyl diphosphate = Delta(6)-protoilludene + diphosphate. Terpene cyclase that catalyzes the cyclization of farnesyl diphosphate (FPP) to delta(6)-protoilludene. This is Delta(6)-protoilludene synthase from Cyclocybe aegerita (Black poplar mushroom).